Here is a 209-residue protein sequence, read N- to C-terminus: MKKAILGKKLGMTQIFNENGKVIPVTVIEAGPCTVIQKKTVEKDGYEAIQVAFGDIREKLRNKPIKGHFAKAGVSVKRHIKEFKLEDSNSLEIGQEIKADVFEAGERVDISGVSKGKGFQGTIRRWNAHRGPMSHGSKFHRAVGSMGASSDPSRTFKNKRMPGHMGNVNTTVLNLEVVRIIPEKNLILIKGGVPGPNKGLVQIRNTVKA.

A disordered region spans residues 141–163 (RAVGSMGASSDPSRTFKNKRMPG).

Belongs to the universal ribosomal protein uL3 family. In terms of assembly, part of the 50S ribosomal subunit. Forms a cluster with proteins L14 and L19.

Functionally, one of the primary rRNA binding proteins, it binds directly near the 3'-end of the 23S rRNA, where it nucleates assembly of the 50S subunit. The protein is Large ribosomal subunit protein uL3 of Clostridium botulinum (strain ATCC 19397 / Type A).